Consider the following 341-residue polypeptide: Ribulose-5-phosphate reductase (341 aa).

Zn(2+)-binding residues include C38, H64, E65, and E144.

Belongs to the zinc-containing alcohol dehydrogenase family. Zn(2+) is required as a cofactor.

The catalysed reaction is D-ribitol 5-phosphate + NADP(+) = D-ribulose 5-phosphate + NADPH + H(+). The protein operates within cell wall biogenesis; poly(ribitol phosphate) teichoic acid biosynthesis. Functionally, catalyzes the NADPH dependent reduction of D-ribulose 5-phosphate to D-ribitol 5-phosphate. The chain is Ribulose-5-phosphate reductase from Bacillus spizizenii (strain ATCC 23059 / NRRL B-14472 / W23) (Bacillus subtilis subsp. spizizenii).